The chain runs to 235 residues: Secretory carrier-associated membrane protein 5 (235 aa).

The Cytoplasmic segment spans residues 1 to 39 (MAEKVNNFPPLPKFIPLKPCFYQDFEADIPPQHLSLTKR). The chain crosses the membrane as a helical span at residues 40-60 (LYYLWMLNSVTLAVNLVGCLA). Over 61–67 (WLIGGGG) the chain is Extracellular. Residues 68-88 (ATNFGLAFLWLILFTPCSYVC) traverse the membrane as a helical segment. Topologically, residues 89 to 102 (WFRPIYKAFKTDSS) are cytoplasmic. A helical transmembrane segment spans residues 103 to 125 (FSFMAFFFTFMAQLVISIIQAVG). Topologically, residues 126 to 148 (IPGWGVCGWIATISFFGTNIGSA) are extracellular. The chain crosses the membrane as a helical span at residues 149-169 (VVMLIPTVMFTVVAVFSFIAL). The Cytoplasmic segment spans residues 170 to 235 (SMVHKFYRGS…TPNYTYSNEM (66 aa)).

The protein belongs to the SCAMP family. SCAMP5 subfamily. In terms of assembly, interacts (via C-terminal part) with SYT1 and SYT2; interaction with synaptotagmins making a link with the SNARE molecules. Interacts with SLC9A7.

The protein resides in the cell membrane. Its subcellular location is the golgi apparatus membrane. It localises to the golgi apparatus. It is found in the trans-Golgi network membrane. The protein localises to the recycling endosome membrane. The protein resides in the cytoplasmic vesicle. Its subcellular location is the secretory vesicle. It localises to the synaptic vesicle membrane. Functionally, required for the calcium-dependent exocytosis of signal sequence-containing cytokines such as CCL5. Probably acts in cooperation with the SNARE machinery. This is Secretory carrier-associated membrane protein 5 (Scamp5) from Rattus norvegicus (Rat).